Consider the following 532-residue polypeptide: Glutamate--cysteine ligase (532 aa).

The protein belongs to the glutamate--cysteine ligase type 1 family. Type 1 subfamily.

It carries out the reaction L-cysteine + L-glutamate + ATP = gamma-L-glutamyl-L-cysteine + ADP + phosphate + H(+). The protein operates within sulfur metabolism; glutathione biosynthesis; glutathione from L-cysteine and L-glutamate: step 1/2. This Pseudomonas fluorescens (strain Pf0-1) protein is Glutamate--cysteine ligase.